The chain runs to 418 residues: Histidine--tRNA ligase (418 aa).

Belongs to the class-II aminoacyl-tRNA synthetase family. In terms of assembly, homodimer.

The protein resides in the cytoplasm. The enzyme catalyses tRNA(His) + L-histidine + ATP = L-histidyl-tRNA(His) + AMP + diphosphate + H(+). This chain is Histidine--tRNA ligase, found in Dehalococcoides mccartyi (strain ATCC BAA-2100 / JCM 16839 / KCTC 5957 / BAV1).